The primary structure comprises 122 residues: Large ribosomal subunit protein uL14 (122 aa).

Belongs to the universal ribosomal protein uL14 family. As to quaternary structure, part of the 50S ribosomal subunit. Forms a cluster with proteins L3 and L19. In the 70S ribosome, L14 and L19 interact and together make contacts with the 16S rRNA in bridges B5 and B8.

Binds to 23S rRNA. Forms part of two intersubunit bridges in the 70S ribosome. The protein is Large ribosomal subunit protein uL14 of Burkholderia lata (strain ATCC 17760 / DSM 23089 / LMG 22485 / NCIMB 9086 / R18194 / 383).